Reading from the N-terminus, the 345-residue chain is uncharacterized protein (345 aa).

Belongs to the Gfo/Idh/MocA family. Biliverdin reductase subfamily.

This is an uncharacterized protein from Escherichia coli (strain K12).